The sequence spans 532 residues: Cytochrome P450 99A2 (532 aa).

A helical transmembrane segment spans residues 30-50 (SAATLTLVSLLTLPILLALLT). C468 contacts heme. The chain crosses the membrane as a helical span at residues 473-493 (FGMVLLELIVARLLYYFDWSL).

Belongs to the cytochrome P450 family. Heme is required as a cofactor.

It localises to the membrane. Functionally, involved in momilactone phytoalexins biosynthesis. Participates in the biosynthetic steps between 9-beta-pimara-7,15-diene and 3-beta-hydroxy-9-beta-pimara-7,15-dien-19,6-beta-olide. This Oryza sativa subsp. japonica (Rice) protein is Cytochrome P450 99A2 (CYP99A2).